The sequence spans 225 residues: Cytidylate kinase (225 aa).

Residue 12 to 20 (GPSGAGKGT) coordinates ATP.

The protein belongs to the cytidylate kinase family. Type 1 subfamily.

The protein localises to the cytoplasm. It catalyses the reaction CMP + ATP = CDP + ADP. The enzyme catalyses dCMP + ATP = dCDP + ADP. The polypeptide is Cytidylate kinase (Edwardsiella ictaluri (strain 93-146)).